The sequence spans 1099 residues: Carbamoyl phosphate synthase large chain (1099 aa).

Residues 1–402 (MPKREDIKRI…ALGKALRSLE (402 aa)) form a carboxyphosphate synthetic domain region. R129, R169, G175, G176, E208, V210, E215, G241, I242, H243, Q285, and E299 together coordinate ATP. The ATP-grasp 1 domain maps to 133-328 (KETMEKAGLE…IAKVAALLAV (196 aa)). Residues Q285, E299, and N301 each contribute to the Mg(2+) site. The Mn(2+) site is built by Q285, E299, and N301. Residues 403–541 (LDAAPKLDLE…STYNGVENEA (139 aa)) form an oligomerization domain region. The tract at residues 542-944 (VPSDREKIMI…AFAKAQIAAG (403 aa)) is carbamoyl phosphate synthetic domain. Positions 666–857 (AKLLKQIGLK…VARIAAKIMV (192 aa)) constitute an ATP-grasp 2 domain. ATP is bound by residues R702, K741, L743, E748, G773, V774, H775, S776, Q816, and E828. Mg(2+) contacts are provided by Q816, E828, and N830. 3 residues coordinate Mn(2+): Q816, E828, and N830. Residues 945–1099 (NPLPTTGAIL…VRRLTDTWKM (155 aa)) form the MGS-like domain. The tract at residues 945–1099 (NPLPTTGAIL…VRRLTDTWKM (155 aa)) is allosteric domain.

Belongs to the CarB family. As to quaternary structure, composed of two chains; the small (or glutamine) chain promotes the hydrolysis of glutamine to ammonia, which is used by the large (or ammonia) chain to synthesize carbamoyl phosphate. Tetramer of heterodimers (alpha,beta)4. Mg(2+) serves as cofactor. The cofactor is Mn(2+).

It catalyses the reaction hydrogencarbonate + L-glutamine + 2 ATP + H2O = carbamoyl phosphate + L-glutamate + 2 ADP + phosphate + 2 H(+). The catalysed reaction is hydrogencarbonate + NH4(+) + 2 ATP = carbamoyl phosphate + 2 ADP + phosphate + 2 H(+). It participates in amino-acid biosynthesis; L-arginine biosynthesis; carbamoyl phosphate from bicarbonate: step 1/1. The protein operates within pyrimidine metabolism; UMP biosynthesis via de novo pathway; (S)-dihydroorotate from bicarbonate: step 1/3. Its function is as follows. Large subunit of the glutamine-dependent carbamoyl phosphate synthetase (CPSase). CPSase catalyzes the formation of carbamoyl phosphate from the ammonia moiety of glutamine, carbonate, and phosphate donated by ATP, constituting the first step of 2 biosynthetic pathways, one leading to arginine and/or urea and the other to pyrimidine nucleotides. The large subunit (synthetase) binds the substrates ammonia (free or transferred from glutamine from the small subunit), hydrogencarbonate and ATP and carries out an ATP-coupled ligase reaction, activating hydrogencarbonate by forming carboxy phosphate which reacts with ammonia to form carbamoyl phosphate. In Thermotoga maritima (strain ATCC 43589 / DSM 3109 / JCM 10099 / NBRC 100826 / MSB8), this protein is Carbamoyl phosphate synthase large chain.